Reading from the N-terminus, the 261-residue chain is MRESALERGPVPEAPAGGPVHAVTVVTLLEKLASMLETLRERQGGLARRQGGLAGSVRRIQSGLGALSRSHDTTSNTLAQLLAKAERVSSHANAAQERAVRRAAQVQRLEANHGLLVARGKLHVLLFKEEGEVPASAFQKAPEPLGPADQSELGPEQLEAEVGESSDEEPVESRAQRLRRTGLQKVQSLRRALSGRKGPAAPPPTPVKPPRLGPGRSAEAQPEAQPALEPTLEPEPPQDTEEDPGRPGAAEEALLQMESVA.

The tract at residues 1 to 84 (MRESALERGP…SNTLAQLLAK (84 aa)) is interaction with CAVIN1. The interval 20–78 (VHAVTVVTLLEKLASMLETLRERQGGLARRQGGLAGSVRRIQSGLGALSRSHDTTSNTL) is leucine-zipper. Phosphoserine occurs at positions 62 and 70. Residue lysine 128 forms a Glycyl lysine isopeptide (Lys-Gly) (interchain with G-Cter in SUMO2) linkage. The tract at residues 135–203 (ASAFQKAPEP…SGRKGPAAPP (69 aa)) is interaction with CAV1. Residues 139–261 (QKAPEPLGPA…EALLQMESVA (123 aa)) form a disordered region. The span at 158 to 170 (LEAEVGESSDEEP) shows a compositional bias: acidic residues. Serine 165, serine 166, and serine 173 each carry phosphoserine. Pro residues predominate over residues 200-212 (AAPPPTPVKPPRL). The segment covering 213–231 (GPGRSAEAQPEAQPALEPT) has biased composition (low complexity).

It belongs to the CAVIN family. Component of the CAVIN complex composed of CAVIN1, CAVIN2, CAVIN3 and CAVIN4. Interacts with PRKCD and with phosphatidylserine. Phosphatidylserine may form a bridge between PKC and PKC-binding partners and stabilize the binding. Interacts with PER2. Interacts with CAVIN1. Interacts (via leucine-zipper domain) with CAV1 in a cholesterol-sensitive manner. Interacts with EPS15L1. In vitro, phosphorylated by PRKCD. In terms of tissue distribution, skeletal muscle, liver, stomach, lung, kidney and heart (at protein level). Strongly expressed in mammary and epithelial cells.

The protein localises to the cytoplasm. Its subcellular location is the membrane. The protein resides in the caveola. It localises to the cytosol. Its function is as follows. Regulates the traffic and/or budding of caveolae. Plays a role in caveola formation in a tissue-specific manner. Required for the formation of caveolae in smooth muscle but not in the lung and heart endothelial cells. Regulates the equilibrium between cell surface-associated and cell surface-dissociated caveolae by promoting the rapid release of caveolae from the cell surface. Plays a role in the regulation of the circadian clock. Modulates the period length and phase of circadian gene expression and also regulates expression and interaction of the core clock components PER1/2 and CRY1/2. The polypeptide is Caveolae-associated protein 3 (Homo sapiens (Human)).